The primary structure comprises 703 residues: Polyribonucleotide nucleotidyltransferase (703 aa).

The Mg(2+) site is built by Asp-489 and Asp-495. Residues 556–615 (PTMIAMKIDTDKIRDVIGKGGATIRAICEETKASIDIEDDGSIKIFGETKEAAEAARQRV) form the KH domain. The S1 motif domain occupies 625-693 (GKIYVGKVER…NRGRIKLSIK (69 aa)).

It belongs to the polyribonucleotide nucleotidyltransferase family. As to quaternary structure, component of the RNA degradosome, which is a multiprotein complex involved in RNA processing and mRNA degradation. It depends on Mg(2+) as a cofactor.

Its subcellular location is the cytoplasm. It catalyses the reaction RNA(n+1) + phosphate = RNA(n) + a ribonucleoside 5'-diphosphate. In terms of biological role, involved in mRNA degradation. Catalyzes the phosphorolysis of single-stranded polyribonucleotides processively in the 3'- to 5'-direction. The protein is Polyribonucleotide nucleotidyltransferase of Pseudomonas fluorescens (strain ATCC BAA-477 / NRRL B-23932 / Pf-5).